The chain runs to 418 residues: Coenzyme A biosynthesis bifunctional protein CoaBC (418 aa).

A phosphopantothenoylcysteine decarboxylase region spans residues 1–195 (MVDHKRIPKQ…ALPYDLAGRK (195 aa)). The tract at residues 196–418 (LLVTAGGTRE…IVTFLAGCSS (223 aa)) is phosphopantothenate--cysteine ligase. 5 residues coordinate CTP: Asp285, Lys295, Phe336, Lys354, and Lys358.

This sequence in the N-terminal section; belongs to the HFCD (homo-oligomeric flavin containing Cys decarboxylase) superfamily. In the C-terminal section; belongs to the PPC synthetase family. Mg(2+) is required as a cofactor. Requires FMN as cofactor.

The enzyme catalyses N-[(R)-4-phosphopantothenoyl]-L-cysteine + H(+) = (R)-4'-phosphopantetheine + CO2. It carries out the reaction (R)-4'-phosphopantothenate + L-cysteine + CTP = N-[(R)-4-phosphopantothenoyl]-L-cysteine + CMP + diphosphate + H(+). Its pathway is cofactor biosynthesis; coenzyme A biosynthesis; CoA from (R)-pantothenate: step 2/5. The protein operates within cofactor biosynthesis; coenzyme A biosynthesis; CoA from (R)-pantothenate: step 3/5. Its function is as follows. Catalyzes two sequential steps in the biosynthesis of coenzyme A. In the first step cysteine is conjugated to 4'-phosphopantothenate to form 4-phosphopantothenoylcysteine. In the second step the latter compound is decarboxylated to form 4'-phosphopantotheine. The sequence is that of Coenzyme A biosynthesis bifunctional protein CoaBC from Mycobacterium bovis (strain ATCC BAA-935 / AF2122/97).